Here is a 331-residue protein sequence, read N- to C-terminus: dTDP-glucose 4,6-dehydratase (331 aa).

Residues Phe-11–Ile-12, Asp-33–Thr-36, Asp-57–Ile-58, Phe-77–Thr-81, and Ser-96 each bind NAD(+). Thr-81 provides a ligand contact to substrate. Residue Thr-120 coordinates substrate. The Proton donor role is filled by Asp-121. Catalysis depends on proton acceptor residues Glu-122 and Tyr-147. Tyr-147–Lys-151 is a binding site for NAD(+). A substrate-binding site is contributed by Asn-176. Residue Asn-177 coordinates NAD(+). Residues Lys-186–Gln-191, Lys-202–Tyr-204, Arg-211, Asn-246, and Asp-269–His-273 contribute to the substrate site.

Belongs to the NAD(P)-dependent epimerase/dehydratase family. dTDP-glucose dehydratase subfamily. As to quaternary structure, homodimer. NAD(+) is required as a cofactor.

The enzyme catalyses dTDP-alpha-D-glucose = dTDP-4-dehydro-6-deoxy-alpha-D-glucose + H2O. The protein operates within carbohydrate biosynthesis; dTDP-L-rhamnose biosynthesis. Functionally, catalyzes the dehydration of dTDP-D-glucose to form dTDP-6-deoxy-D-xylo-4-hexulose via a three-step process involving oxidation, dehydration and reduction. Involved in the biosynthesis of the dTDP-L-rhamnose which is a component of the critical linker, D-N-acetylglucosamine-L-rhamnose disaccharide, which connects the galactan region of arabinogalactan to peptidoglycan via a phosphodiester linkage. This chain is dTDP-glucose 4,6-dehydratase (rmlB), found in Mycolicibacterium smegmatis (strain ATCC 700084 / mc(2)155) (Mycobacterium smegmatis).